Here is a 319-residue protein sequence, read N- to C-terminus: Methionyl-tRNA formyltransferase (319 aa).

Position 113–116 (113–116) interacts with (6S)-5,6,7,8-tetrahydrofolate; that stretch reads SLLP.

Belongs to the Fmt family.

It carries out the reaction L-methionyl-tRNA(fMet) + (6R)-10-formyltetrahydrofolate = N-formyl-L-methionyl-tRNA(fMet) + (6S)-5,6,7,8-tetrahydrofolate + H(+). In terms of biological role, attaches a formyl group to the free amino group of methionyl-tRNA(fMet). The formyl group appears to play a dual role in the initiator identity of N-formylmethionyl-tRNA by promoting its recognition by IF2 and preventing the misappropriation of this tRNA by the elongation apparatus. This is Methionyl-tRNA formyltransferase from Hamiltonella defensa subsp. Acyrthosiphon pisum (strain 5AT).